Reading from the N-terminus, the 328-residue chain is tRNA dimethylallyltransferase (328 aa).

10-17 (GPTASGKT) contacts ATP. 12–17 (TASGKT) serves as a coordination point for substrate.

Belongs to the IPP transferase family. Monomer. Mg(2+) is required as a cofactor.

The catalysed reaction is adenosine(37) in tRNA + dimethylallyl diphosphate = N(6)-dimethylallyladenosine(37) in tRNA + diphosphate. Its function is as follows. Catalyzes the transfer of a dimethylallyl group onto the adenine at position 37 in tRNAs that read codons beginning with uridine, leading to the formation of N6-(dimethylallyl)adenosine (i(6)A). This is tRNA dimethylallyltransferase from Bifidobacterium longum subsp. infantis (strain ATCC 15697 / DSM 20088 / JCM 1222 / NCTC 11817 / S12).